The chain runs to 1943 residues: MSPLLRSICDITEIFNQYVSHDCDGAALTKKDLKNLLEREFGAVLRRPHDPKTVDLILELLDLDSNGRVDFNEFLLFIFKVAQACYYALGQATGLDEEKRARCDGKESLLQDRRQEEDQRRFEPRDRQLEEEPGQRRRQKRQEQERELAEGEEQSEKQERLEQRDRQRRDEELWRQRQEWQEREERRAEEEQLQSCKGHETEEFPDEEQLRRRELLELRRKGREEKQQQRRERQDRVFQEEEEKEWRKRETVLRKEEEKLQEEEPQRQRELQEEEEQLRKLERQELRRERQEEEQQQQRLRREQQLRRKQEEERREQQEERREQQERREQQEERREQQLRREQEERREQQLRREQEEERREQQLRREQEEERREQQLRREQQLRREQQLRREQQLRREQQLRREQQLRREQQLRREQQLRREQQLRREQEEERHEQKHEQERREQRLKREQEERRDWLKREEETERHEQERRKQQLKRDQEEERRERWLKLEEEERREQQERREQQLRREQEERREQRLKRQEEEERLQQRLRSEQQLRREQEERREQLLKREEEKRLEQERREQRLKREQEERRDQLLKREEERRQQRLKREQEERLEQRLKREEVERLEQEERREQRLKREEPEEERRQQLLKSEEQEERRQQQLRREQQERREQRLKREEEEERLEQRLKREHEEERREQELAEEEQEQARERIKSRIPKWQWQLESEADARQSKVYSRPRKQEGQRRRQEQEEKRRRRESELQWQEEERAHRQQQEEEQRRDFTWQWQAEEKSERGRQRLSARPPLREQRERQLRAEERQQREQRFLPEEEEKEQRRRQRREREKELQFLEEEEQLQRRERAQQLQEEEDGLQEDQERRRSQEQRRDQKWRWQLEEERKRRRHTLYAKPALQEQLRKEQQLLQEEEEELQREEREKRRRQEQERQYREEEQLQQEEEQLLREEREKRRRQERERQYRKDKKLQQKEEQLLGEEPEKRRRQEREKKYREEEELQQEEEQLLREEREKRRRQEWERQYRKKDELQQEEEQLLREEREKRRLQERERQYREEEELQQEEEQLLGEERETRRRQELERQYRKEEELQQEEEQLLREEPEKRRRQERERQCREEEELQQEEEQLLREEREKRRRQELERQYREEEEVQQEEEQLLREEPEKRRRQELERQYREEEELQQEEEQLLREEQEKRRQERERQYREEEELQRQKRKQRYRDEDQRSDLKWQWEPEKENAVRDNKVYCKGRENEQFRQLEDSQLRDRQSQQDLQHLLGEQQERDREQERRRWQQRDRHFPEEEQLEREEQKEAKRRDRKSQEEKQLLREEREEKRRRQETDRKFREEEQLLQEREEQPLRRQERDRKFREEELRHQEQGRKFLEEEQRLRRQERERKFLKEEQQLRCQEREQQLRQDRDRKFREEEQQLSRQERDRKFREEEQQVRRQERERKFLEEEQQLRQERHRKFREEEQLLQEREEQQLHRQERDRKFLEEEQQLRRQERDRKFREQELRSQEPERKFLEEEQQLHRQQRQRKFLQEEQQLRRQERGQQRRQDRDRKFREEEQLRQEREEQQLSRQERDRKFRLEEQKVRRQEQERKFMEDEQQLRRQEGQQQLRQERDRKFREDEQLLQEREEQQLHRQERDRKFLEEEPQLRRQEREQQLRHDRDRKFREEEQLLQEGEEQQLRRQERDRKFREEEQQLRRQERERKFLQEEQQLRRQELERKFREEEQLRQETEQEQLRRQERYRKILEEEQLRPEREEQQLRRQERDRKFREEEQLRQEREEQQLRSQESDRKFREEEQLRQEREEQQLRPQQRDGKYRWEEEQLQLEEQEQRLRQERDRQYRAEEQFATQEKSRREEQELWQEEEQKRRQERERKLREEHIRRQQKEEQRHRQVGEIKSQEGKGHGRLLEPGTHQFASVPVRSSPLYEYIQEQRSQYRP.

Residues methionine 1–glutamine 91 are S-100-like. 2 EF-hand domains span residues cysteine 23–proline 48 and histidine 49–alanine 84. Ca(2+)-binding residues include aspartate 32, aspartate 62, aspartate 64, asparagine 66, arginine 68, and glutamate 73. Disordered stretches follow at residues leucine 110–arginine 164, arginine 186–glutamine 209, and glycine 222–glutamate 274. A compositionally biased stretch (basic and acidic residues) spans lysine 197–glutamine 209. Residues arginine 314 to glutamate 326 form a 1-1; approximate repeat. The tract at residues arginine 314–leucine 377 is 5 X 13 AA tandem repeats of R-R-E-Q-E-E-E-R-R-E-Q-Q-L. Residues arginine 327–leucine 339 form a 1-2; approximate repeat. The stretch at arginine 340–leucine 351 is one 1-3; approximate repeat. A run of 10 repeats spans residues arginine 352–leucine 364, arginine 365–leucine 377, arginine 378–leucine 383, arginine 384–leucine 389, arginine 390–leucine 395, arginine 396–leucine 401, arginine 402–leucine 407, arginine 408–leucine 413, arginine 414–leucine 419, and arginine 420–leucine 425. Residues arginine 378–leucine 425 are 8 X 6 AA tandem repeats of R-R-E-Q-Q-L. The segment at leucine 425–glutamine 683 is 9 X 28 AA approximate tandem repeats. 4 disordered regions span residues arginine 426–arginine 485, arginine 509–arginine 546, glutamate 608–glutamine 819, and glutamate 837–glutamine 872. 4 stretches are compositionally biased toward basic and acidic residues: residues glutamate 608–glutamate 684, arginine 724–arginine 781, proline 789–proline 812, and aspartate 859–glutamine 872. Repeat copies occupy residues leucine 906–glutamine 935, leucine 936–lysine 965, leucine 966–glutamate 995, leucine 996–glutamate 1025, leucine 1026–glutamate 1055, leucine 1056–glutamate 1085, leucine 1086–glutamate 1115, leucine 1116–glutamate 1145, valine 1146–glutamate 1175, and leucine 1176–glutamate 1204. The segment at leucine 906–glutamate 1204 is 10 X 30 AA tandem repeats. A compositionally biased stretch (basic and acidic residues) spans lysine 950–glutamate 992. Disordered stretches follow at residues lysine 950–glutamate 1000, arginine 1046–glutamate 1120, glutamate 1137–arginine 1162, glutamine 1193–glutamate 1371, arginine 1404–glutamate 1435, glutamine 1492–arginine 1691, proline 1757–lysine 1820, glutamate 1834–leucine 1864, and arginine 1876–serine 1928. Residues glutamate 1052 to leucine 1064 show a composition bias toward acidic residues. 2 stretches are compositionally biased toward basic and acidic residues: residues glycine 1065–glutamate 1085 and glutamine 1092–arginine 1111. Over residues glutamate 1142–glutamate 1151 the composition is skewed to acidic residues. Residues glutamine 1152–arginine 1162 show a composition bias toward basic and acidic residues. 2 stretches are compositionally biased toward basic and acidic residues: residues tyrosine 1214–serine 1263 and glutamine 1274–glutamate 1371. The interval histidine 1292 to arginine 1894 is 23 X 26 AA approximate tandem repeats. Basic and acidic residues-rich tracts occupy residues glutamine 1492–leucine 1524, phenylalanine 1533–glutamate 1673, and glutamine 1682–arginine 1691. The segment covering arginine 1876–leucine 1912 has biased composition (basic and acidic residues).

This sequence belongs to the S100-fused protein family. Monomer. Post-translationally, substrate of transglutaminase. Some 200 arginines are probably converted to citrullines by peptidylarginine deimidase. As to expression, found in the hard keratinizing tissues such as the inner root sheath (IRS) of hair follicles and medulla, and in the filiform papillae of dorsal tongue epithelium.

Its function is as follows. Intermediate filament-associated protein that associates in regular arrays with keratin intermediate filaments (KIF) of the inner root sheath cells of the hair follicle and the granular layer of the epidermis. It later becomes cross-linked to KIF by isodipeptide bonds. It may serve as scaffold protein, together with involucrin, in the organization of the cell envelope or even anchor the cell envelope to the KIF network. It may be involved in its own calcium-dependent postsynthetic processing during terminal differentiation. The polypeptide is Trichohyalin (TCHH) (Homo sapiens (Human)).